The chain runs to 363 residues: DNA replication and repair protein RecF (363 aa).

Residue 30 to 37 (GINGSGKS) coordinates ATP.

It belongs to the RecF family.

It localises to the cytoplasm. The RecF protein is involved in DNA metabolism; it is required for DNA replication and normal SOS inducibility. RecF binds preferentially to single-stranded, linear DNA. It also seems to bind ATP. This chain is DNA replication and repair protein RecF, found in Pseudoalteromonas atlantica (strain T6c / ATCC BAA-1087).